The following is a 237-amino-acid chain: MAREECKALLDALNKTTACYHHLVLTVGGSADTQDLREELQKTRQKARELAVATGARLTVALRDRSLATEERAEFERLWVAFSGCLDLLEADMQRALALGATFPLHAPRRPLVRTGVTGGSSAVAARALSARSLRHEAESDFDVADLPQLEREVLQVGEMIDDMEMKVNVPRWTVQARQAAGAELLSGASAGASSAGGISVEERAGPCDPSKALAATVFSAVLLVAVALALCVAKLS.

Residues 1–212 (MAREECKALL…ERAGPCDPSK (212 aa)) lie on the Cytoplasmic side of the membrane. Positions 30–54 (SADTQDLREELQKTRQKARELAVAT) form a coiled coil. The segment at 153–202 (EVLQVGEMIDDMEMKVNVPRWTVQARQAAGAELLSGASAGASSAGGISVE) is SNARE-like. Residues 213-233 (ALAATVFSAVLLVAVALALCV) traverse the membrane as a helical; Anchor for type IV membrane protein segment. The Extracellular portion of the chain corresponds to 234–237 (AKLS).

It belongs to the RGS7BP/RGS9BP family. Specifically interacts with isoform RGS9-1 of RGS9. Interaction is decreased when RGS9-1 is phosphorylated at 'Ser-475'. Component of the RGS9-1-Gbeta5 complex composed of RGS9-1, Gbeta5 (GNB5) and RGS9BP. As to expression, predominantly expressed in photoreceptors of the retina. Weakly expressed in other areas of the central nervous system.

The protein resides in the membrane. Functionally, regulator of G protein-coupled receptor (GPCR) signaling in phototransduction. Participates in the recovery phase of visual transduction via its interaction with RGS9-1 isoform. Acts as a membrane-anchor that mediates the targeting of RGS9-1 to the photoreceptor outer segment, where phototransduction takes place. Enhances the ability of RGS9-1 to stimulate G protein GTPase activity, allowing the visual signal to be terminated on the physiologically time scale. It also controls the proteolytic stability of RGS9-1, probably by protecting it from degradation. The polypeptide is Regulator of G-protein signaling 9-binding protein (Rgs9bp) (Mus musculus (Mouse)).